The chain runs to 248 residues: Ubiquinone/menaquinone biosynthesis C-methyltransferase UbiE (248 aa).

Positions 68 and 92 each coordinate S-adenosyl-L-methionine.

The protein belongs to the class I-like SAM-binding methyltransferase superfamily. MenG/UbiE family.

The enzyme catalyses a 2-demethylmenaquinol + S-adenosyl-L-methionine = a menaquinol + S-adenosyl-L-homocysteine + H(+). It catalyses the reaction a 2-methoxy-6-(all-trans-polyprenyl)benzene-1,4-diol + S-adenosyl-L-methionine = a 5-methoxy-2-methyl-3-(all-trans-polyprenyl)benzene-1,4-diol + S-adenosyl-L-homocysteine + H(+). It functions in the pathway quinol/quinone metabolism; menaquinone biosynthesis; menaquinol from 1,4-dihydroxy-2-naphthoate: step 2/2. The protein operates within cofactor biosynthesis; ubiquinone biosynthesis. In terms of biological role, methyltransferase required for the conversion of demethylmenaquinol (DMKH2) to menaquinol (MKH2) and the conversion of 2-polyprenyl-6-methoxy-1,4-benzoquinol (DDMQH2) to 2-polyprenyl-3-methyl-6-methoxy-1,4-benzoquinol (DMQH2). This Rickettsia akari (strain Hartford) protein is Ubiquinone/menaquinone biosynthesis C-methyltransferase UbiE.